Reading from the N-terminus, the 482-residue chain is Probable 2-carboxy-D-arabinitol-1-phosphatase (482 aa).

A chloroplast-targeting transit peptide spans 1-34 (MISLPLTTPILPSRCLLHKTRRQNSTRRRLLIRS). The active-site Tele-phosphohistidine intermediate is the histidine 55. The active-site Proton donor/acceptor is the glutamate 129.

Belongs to the phosphoglycerate mutase family.

It localises to the plastid. The protein resides in the chloroplast stroma. It catalyses the reaction 2-carboxy-D-arabinitol 1-phosphate + H2O = 2-carboxy-D-arabinitol + phosphate. Phosphoglycerate mutase-like protein lacking PGM activity, but having 2-carboxy-D-arabinitol 1-phosphate (CA1P) phosphatase activity. Prevents the accumulation of D-glycero-2,3-pentodiulose-1,5-bisphosphate (PDBP) a potent inhibitor of ribulose-1,5-bisphosphate carboxylase (RuBisCO). PDBP is produced during the oxidation of ribulose-1,5-bisphosphate, the substrate of RuBisCO. This is Probable 2-carboxy-D-arabinitol-1-phosphatase from Arabidopsis thaliana (Mouse-ear cress).